We begin with the raw amino-acid sequence, 392 residues long: Iripin-4 (392 aa).

The first 16 residues, 1–16, serve as a signal peptide directing secretion; that stretch reads MRSLATFMSLLTICWG. N-linked (GlcNAc...) asparagine glycosylation is found at Asn104, Asn130, and Asn265.

This sequence belongs to the serpin family. Female salivary gland.

It is found in the secreted. Serpin with unknown function. Weakly inhibits human granzyme B (GZMB). Acts as a substrate for porcine elastase. The sequence is that of Iripin-4 from Ixodes ricinus (Common tick).